A 394-amino-acid polypeptide reads, in one-letter code: Flap endonuclease 1 (394 aa).

Residues 1 to 104 (MGIKQLFSII…GELAKRFQRK (104 aa)) form an N-domain region. Mg(2+) is bound at residue Asp34. Positions 47 and 70 each coordinate DNA. Mg(2+)-binding residues include Asp86, Glu158, Glu160, Asp179, and Asp181. An I-domain region spans residues 122-253 (DVEKFSRRTV…STALKLIREH (132 aa)). Glu158 is a DNA binding site. DNA is bound by residues Gly231 and Asp233. Asp233 contacts Mg(2+). The interval 341–349 (QQARIEGFF) is interaction with PCNA. Positions 356–383 (EEEKKAHKRKLEEQAEQKRKKVKEEKKE) are enriched in basic and acidic residues. Positions 356-394 (EEEKKAHKRKLEEQAEQKRKKVKEEKKEKAKLKAKPRGA) are disordered. Over residues 384–394 (KAKLKAKPRGA) the composition is skewed to basic residues.

This sequence belongs to the XPG/RAD2 endonuclease family. FEN1 subfamily. As to quaternary structure, interacts with PCNA. Three molecules of FEN1 bind to one PCNA trimer with each molecule binding to one PCNA monomer. PCNA stimulates the nuclease activity without altering cleavage specificity. Mg(2+) is required as a cofactor. In terms of processing, phosphorylated. Phosphorylation upon DNA damage induces relocalization to the nuclear plasma.

The protein localises to the nucleus. It is found in the nucleolus. It localises to the nucleoplasm. Its subcellular location is the mitochondrion. Its function is as follows. Structure-specific nuclease with 5'-flap endonuclease and 5'-3' exonuclease activities involved in DNA replication and repair. During DNA replication, cleaves the 5'-overhanging flap structure that is generated by displacement synthesis when DNA polymerase encounters the 5'-end of a downstream Okazaki fragment. It enters the flap from the 5'-end and then tracks to cleave the flap base, leaving a nick for ligation. Also involved in the long patch base excision repair (LP-BER) pathway, by cleaving within the apurinic/apyrimidinic (AP) site-terminated flap. Acts as a genome stabilization factor that prevents flaps from equilibrating into structures that lead to duplications and deletions. Also possesses 5'-3' exonuclease activity on nicked or gapped double-stranded DNA, and exhibits RNase H activity. Also involved in replication and repair of rDNA and in repairing mitochondrial DNA. The chain is Flap endonuclease 1 from Sordaria macrospora (strain ATCC MYA-333 / DSM 997 / K(L3346) / K-hell).